We begin with the raw amino-acid sequence, 167 residues long: Large ribosomal subunit protein bL9 (167 aa).

This sequence belongs to the bacterial ribosomal protein bL9 family.

Functionally, binds to the 23S rRNA. The polypeptide is Large ribosomal subunit protein bL9 (Chlamydia trachomatis serovar L2 (strain ATCC VR-902B / DSM 19102 / 434/Bu)).